We begin with the raw amino-acid sequence, 142 residues long: RNA polymerase-binding transcription factor DksA (142 aa).

Disordered regions lie at residues 1-20, 51-70, and 119-142; these read MQTA…EDEP, HLQK…SSET, and RPTA…HRDD. A dksA C4-type zinc finger spans residues 104-128; sequence CEETGEPIGLARLEARPTATMSVEA. The span at 128–142 shows a compositional bias: basic and acidic residues; that stretch reads AQERHERRERVHRDD.

The protein belongs to the DksA family. In terms of assembly, interacts directly with the RNA polymerase.

It is found in the cytoplasm. In terms of biological role, transcription factor that acts by binding directly to the RNA polymerase (RNAP). Required for negative regulation of rRNA expression and positive regulation of several amino acid biosynthesis promoters. This chain is RNA polymerase-binding transcription factor DksA, found in Caulobacter vibrioides (strain ATCC 19089 / CIP 103742 / CB 15) (Caulobacter crescentus).